Consider the following 312-residue polypeptide: Olfactory receptor 6C76 (312 aa).

Residues 1 to 23 are Extracellular-facing; the sequence is MKNRTSVTDFILLGLTDNPQLQV. An N-linked (GlcNAc...) asparagine glycan is attached at Asn3. A helical transmembrane segment spans residues 24–44; sequence VIFSFLFLTYVLSVTGNLTII. Over 45-57 the chain is Cytoplasmic; it reads SLTLLDSHLKTPM. Residues 58 to 80 traverse the membrane as a helical segment; the sequence is YFFLRNFSLEISFTSVCNPRFLI. Topologically, residues 81–94 are extracellular; it reads SILTGDKSISYNAC. An intrachain disulfide couples Cys94 to Cys176. The chain crosses the membrane as a helical span at residues 95 to 115; it reads AAQLFFFIFLGSTEFFLLASM. The Cytoplasmic portion of the chain corresponds to 116 to 142; the sequence is SYDCYVAICKPLHYTTIMSDRICYQLI. A helical membrane pass occupies residues 143-163; sequence ISSWLAGFLVIFPPLAMGLQL. Over 164 to 195 the chain is Extracellular; sequence DFCDSNVIDHFTCDSAPLLQISCTDTSTLELM. Residues 196–216 form a helical membrane-spanning segment; it reads SFILALFTLISTLILVILSYT. Residues 217 to 238 are Cytoplasmic-facing; that stretch reads YIIRTILRIPSAQQRKKAFSTC. A helical transmembrane segment spans residues 239-259; that stretch reads SSHVIVVSISYGSCIFMYVKT. The Extracellular portion of the chain corresponds to 260–267; that stretch reads SAKEGVAL. Residues 268–288 traverse the membrane as a helical segment; sequence TKGVAILNTSVAPMLNPFIYT. The Cytoplasmic portion of the chain corresponds to 289–312; that stretch reads LRNQQVKQAFKDVLRKISHKKKKH.

This sequence belongs to the G-protein coupled receptor 1 family.

It localises to the cell membrane. Its function is as follows. Odorant receptor. This Homo sapiens (Human) protein is Olfactory receptor 6C76 (OR6C76).